A 427-amino-acid polypeptide reads, in one-letter code: Aspartate aminotransferase, mitochondrial (427 aa).

The N-terminal 26 residues, 1-26, are a transit peptide targeting the mitochondrion; sequence MALLKSRLLVGVARCQPCLAAVQGRA. 3 residues coordinate substrate: Gly62, Trp159, and Asn212. Residue Lys276 is modified to N6-(pyridoxal phosphate)lysine. Arg404 is a binding site for substrate.

This sequence belongs to the class-I pyridoxal-phosphate-dependent aminotransferase family. As to quaternary structure, homodimer. Pyridoxal 5'-phosphate serves as cofactor.

The protein resides in the mitochondrion matrix. It carries out the reaction L-aspartate + 2-oxoglutarate = oxaloacetate + L-glutamate. It catalyses the reaction L-kynurenine + 2-oxoglutarate = kynurenate + L-glutamate + H2O. Its function is as follows. Catalyzes the irreversible transamination of the L-tryptophan metabolite L-kynurenine to form kynurenic acid (KA). As a member of the malate-aspartate shuttle, it has a key role in the intracellular NAD(H) redox balance. Is important for metabolite exchange between mitochondria and cytosol, and for amino acid metabolism. In Xenopus tropicalis (Western clawed frog), this protein is Aspartate aminotransferase, mitochondrial (got2).